We begin with the raw amino-acid sequence, 185 residues long: Ribosome maturation factor RimM (185 aa).

Residues 96–171 form the PRC barrel domain; the sequence is EDEFYHSDLL…VITIDPPEDV (76 aa). The interval 165–185 is disordered; sequence IDPPEDVGSKAEEEGGGAPDD.

It belongs to the RimM family. Binds ribosomal protein uS19.

The protein localises to the cytoplasm. Its function is as follows. An accessory protein needed during the final step in the assembly of 30S ribosomal subunit, possibly for assembly of the head region. Essential for efficient processing of 16S rRNA. May be needed both before and after RbfA during the maturation of 16S rRNA. It has affinity for free ribosomal 30S subunits but not for 70S ribosomes. The sequence is that of Ribosome maturation factor RimM from Maricaulis maris (strain MCS10) (Caulobacter maris).